Here is a 474-residue protein sequence, read N- to C-terminus: tRNA-2-methylthio-N(6)-dimethylallyladenosine synthase (474 aa).

The 118-residue stretch at 3 to 120 (KKLHIKTWGC…LPEMINSVRG (118 aa)) folds into the MTTase N-terminal domain. Residues Cys-12, Cys-49, Cys-83, Cys-157, Cys-161, and Cys-164 each coordinate [4Fe-4S] cluster. Residues 143–375 (RAEGPTAFVS…QERINQQAMA (233 aa)) enclose the Radical SAM core domain. The region spanning 378-441 (RRMLGTTQRI…PNSLRGKVVR (64 aa)) is the TRAM domain.

This sequence belongs to the methylthiotransferase family. MiaB subfamily. Monomer. Requires [4Fe-4S] cluster as cofactor.

It is found in the cytoplasm. The enzyme catalyses N(6)-dimethylallyladenosine(37) in tRNA + (sulfur carrier)-SH + AH2 + 2 S-adenosyl-L-methionine = 2-methylsulfanyl-N(6)-dimethylallyladenosine(37) in tRNA + (sulfur carrier)-H + 5'-deoxyadenosine + L-methionine + A + S-adenosyl-L-homocysteine + 2 H(+). Functionally, catalyzes the methylthiolation of N6-(dimethylallyl)adenosine (i(6)A), leading to the formation of 2-methylthio-N6-(dimethylallyl)adenosine (ms(2)i(6)A) at position 37 in tRNAs that read codons beginning with uridine. The chain is tRNA-2-methylthio-N(6)-dimethylallyladenosine synthase from Escherichia coli (strain UTI89 / UPEC).